Consider the following 236-residue polypeptide: UPF0280 protein Mlab_0453 (236 aa).

Belongs to the UPF0280 family.

This Methanocorpusculum labreanum (strain ATCC 43576 / DSM 4855 / Z) protein is UPF0280 protein Mlab_0453.